Consider the following 495-residue polypeptide: Telomere-binding protein subunit alpha (495 aa).

A compositionally biased stretch (polar residues) spans 1–13 (MSTAAKQNRSTSR). Residues 1 to 31 (MSTAAKQNRSTSRVSKKKTAAPKEGAAKKSD) are disordered.

This sequence belongs to the telombin family. In terms of assembly, heterodimer of an alpha and a beta subunit.

It is found in the nucleus. The protein localises to the chromosome. It localises to the telomere. Its function is as follows. May function as protective capping of the single-stranded telomeric overhang. May also participate in telomere length regulation during DNA replication. Binds specifically to the T4G4-containing extension on the 3'strand and protects this region of the telomere from nuclease digestion and chemical modification. This is Telomere-binding protein subunit alpha (MAC-56A) from Sterkiella nova (Ciliate).